A 504-amino-acid polypeptide reads, in one-letter code: Argininosuccinate lyase 2 (504 aa).

Belongs to the lyase 1 family. Argininosuccinate lyase subfamily.

It localises to the cytoplasm. It catalyses the reaction 2-(N(omega)-L-arginino)succinate = fumarate + L-arginine. It participates in amino-acid biosynthesis; L-arginine biosynthesis; L-arginine from L-ornithine and carbamoyl phosphate: step 3/3. In Agrobacterium fabrum (strain C58 / ATCC 33970) (Agrobacterium tumefaciens (strain C58)), this protein is Argininosuccinate lyase 2.